A 677-amino-acid polypeptide reads, in one-letter code: Protein hook (677 aa).

The Calponin-homology (CH) domain maps to 6 to 123 (NEMYYSLLEW…RLLQLVLGCA (118 aa)). Coiled-coil stretches lie at residues 135–436 (EIMC…KCGH) and 478–588 (QTAL…AKEV).

The protein belongs to the hook family. As to quaternary structure, homodimer. Interacts with microtubules via its N-terminus.

Its subcellular location is the cytoplasm. It is found in the cytoskeleton. The protein localises to the endosome. The protein resides in the synapse. Functionally, involved in endocytic trafficking by stabilizing organelles of the endocytic pathway. Probably acts as a cytoskeletal linker protein required to tether endosome vesicles to the cytoskeleton. Involved in modulation of endocytosis at stages required for down-regulation of membrane proteins that control synapse size. Not involved in synaptic vesicle recycling. Required in R7 cells for boss endocytosis into multivesicular bodies (MVBs). Has a role in regulating adult longevity. The protein is Protein hook of Drosophila pseudoobscura pseudoobscura (Fruit fly).